The chain runs to 58 residues: Mesomartoxin (58 aa).

The signal sequence occupies residues 1–29 (MMSRLSVFILIALVLSVIIDVLNNSKVEG). 3 disulfide bridges follow: cysteine 31-cysteine 49, cysteine 35-cysteine 54, and cysteine 39-cysteine 56.

Belongs to the short scorpion toxin superfamily. Potassium channel inhibitor family. Alpha-KTx 26 subfamily. In terms of tissue distribution, expressed by the venom gland.

The protein localises to the secreted. Its function is as follows. Recombinant toxin that reversibly blocks the voltage-gated potassium channels Shaker (IC(50)=0.054 nM), rKv1.2/KCNA2 (IC(50)=15.6 nM), and rKv1.3/KCNA3 (IC(50)=12.5 uM). This Olivierus martensii (Manchurian scorpion) protein is Mesomartoxin.